A 561-amino-acid chain; its full sequence is Arginine--tRNA ligase (561 aa).

The 'HIGH' region motif lies at 128 to 138 (ANPTGPLHVGH).

This sequence belongs to the class-I aminoacyl-tRNA synthetase family. In terms of assembly, monomer.

The protein localises to the cytoplasm. It catalyses the reaction tRNA(Arg) + L-arginine + ATP = L-arginyl-tRNA(Arg) + AMP + diphosphate. The sequence is that of Arginine--tRNA ligase from Marinobacter nauticus (strain ATCC 700491 / DSM 11845 / VT8) (Marinobacter aquaeolei).